A 183-amino-acid chain; its full sequence is Apo-citrate lyase phosphoribosyl-dephospho-CoA transferase (183 aa).

The protein belongs to the CitX family.

The catalysed reaction is apo-[citrate lyase ACP] + 2'-(5''-triphospho-alpha-D-ribosyl)-3'-dephospho-CoA = holo-[citrate lyase ACP] + diphosphate. Its function is as follows. Transfers 2-(5''-triphosphoribosyl)-3'-dephosphocoenzyme-A on a serine residue to the apo-acyl carrier protein (gamma chain) of the citrate lyase to yield holo-acyl carrier protein. This chain is Apo-citrate lyase phosphoribosyl-dephospho-CoA transferase, found in Citrobacter koseri (strain ATCC BAA-895 / CDC 4225-83 / SGSC4696).